The primary structure comprises 351 residues: MAEAEYFIWTNPEGDFEKEFGNITGMLPTGDYFIPCKRVPITNRQALVVFYALVSLLSLLGNSLVMLVILYRRRTRSVMDVYVLNLAIADLLFSLTLPFLAVSKLKGWIFGTPLCKMVSLLKEFNFFSGILLLACISVDRYLAIVHATRTLARKRYLVKFVCVGIWGLSLILSLPFAIFRQAYKPFRSGTVCYEVLGEATTDFRMTLRGLSHIFGFLLPLLTMLVCYGLTLRMLFKTHMRQKHRAMGVIFAVVLVFLLCCLPYNLVLLSDTLLGAHLIEDTCERRNDIDQALYITEILGFSHSCLNPIIYAFVGQNFRHEFLKILANHGLVRKEVLTHRRVAFHTSLTAIY.

The Extracellular segment spans residues 1-44 (MAEAEYFIWTNPEGDFEKEFGNITGMLPTGDYFIPCKRVPITNR). Asparagine 22 carries an N-linked (GlcNAc...) asparagine glycan. A helical membrane pass occupies residues 45 to 71 (QALVVFYALVSLLSLLGNSLVMLVILY). At 72–80 (RRRTRSVMD) the chain is on the cytoplasmic side. Residues 81 to 101 (VYVLNLAIADLLFSLTLPFLA) form a helical membrane-spanning segment. Residues 102-116 (VSKLKGWIFGTPLCK) are Extracellular-facing. Residues cysteine 115 and cysteine 192 are joined by a disulfide bond. A helical transmembrane segment spans residues 117 to 138 (MVSLLKEFNFFSGILLLACISV). The Cytoplasmic portion of the chain corresponds to 139–159 (DRYLAIVHATRTLARKRYLVK). The helical transmembrane segment at 160–179 (FVCVGIWGLSLILSLPFAIF) threads the bilayer. Topologically, residues 180-204 (RQAYKPFRSGTVCYEVLGEATTDFR) are extracellular. Residues 205-225 (MTLRGLSHIFGFLLPLLTMLV) form a helical membrane-spanning segment. Over 226–247 (CYGLTLRMLFKTHMRQKHRAMG) the chain is Cytoplasmic. Residues 248–269 (VIFAVVLVFLLCCLPYNLVLLS) traverse the membrane as a helical segment. At 270–290 (DTLLGAHLIEDTCERRNDIDQ) the chain is on the extracellular side. The helical transmembrane segment at 291–313 (ALYITEILGFSHSCLNPIIYAFV) threads the bilayer. Over 314–351 (GQNFRHEFLKILANHGLVRKEVLTHRRVAFHTSLTAIY) the chain is Cytoplasmic.

This sequence belongs to the G-protein coupled receptor 1 family. As to quaternary structure, interacts with IL8. Interacts with GNAI2.

The protein resides in the cell membrane. Functionally, receptor to interleukin-8, which is a powerful neutrophils chemotactic factor. Binding of IL-8 to the receptor causes activation of neutrophils. This response is mediated via a G-protein that activates a phosphatidylinositol-calcium second messenger system. This chain is C-X-C chemokine receptor type 1 (Cxcr1), found in Mus musculus (Mouse).